The primary structure comprises 147 residues: Small ribosomal subunit protein uS5 (147 aa).

The region spanning 9–72 is the S5 DRBM domain; the sequence is FEEVIVDIGR…DDAFKNIIHV (64 aa).

It belongs to the universal ribosomal protein uS5 family. As to quaternary structure, part of the 30S ribosomal subunit. Contacts proteins S4 and S8.

Functionally, with S4 and S12 plays an important role in translational accuracy. Its function is as follows. Located at the back of the 30S subunit body where it stabilizes the conformation of the head with respect to the body. This chain is Small ribosomal subunit protein uS5, found in Campylobacter concisus (strain 13826).